Consider the following 466-residue polypeptide: Ribulose bisphosphate carboxylase large chain (466 aa).

An N6,N6,N6-trimethyllysine modification is found at Lys-5. Substrate-binding residues include Asn-114 and Thr-164. Lys-166 acts as the Proton acceptor in catalysis. Lys-168 lines the substrate pocket. Mg(2+) is bound by residues Lys-192, Asp-194, and Glu-195. Residue Lys-192 is modified to N6-carboxylysine. His-285 (proton acceptor) is an active-site residue. Substrate-binding residues include Arg-286, His-318, and Ser-370.

Belongs to the RuBisCO large chain family. Type I subfamily. Heterohexadecamer of 8 large chains and 8 small chains; disulfide-linked. The disulfide link is formed within the large subunit homodimers. The cofactor is Mg(2+). Post-translationally, the disulfide bond which can form in the large chain dimeric partners within the hexadecamer appears to be associated with oxidative stress and protein turnover.

The protein resides in the plastid. Its subcellular location is the chloroplast. It carries out the reaction 2 (2R)-3-phosphoglycerate + 2 H(+) = D-ribulose 1,5-bisphosphate + CO2 + H2O. It catalyses the reaction D-ribulose 1,5-bisphosphate + O2 = 2-phosphoglycolate + (2R)-3-phosphoglycerate + 2 H(+). In terms of biological role, ruBisCO catalyzes two reactions: the carboxylation of D-ribulose 1,5-bisphosphate, the primary event in carbon dioxide fixation, as well as the oxidative fragmentation of the pentose substrate in the photorespiration process. Both reactions occur simultaneously and in competition at the same active site. The protein is Ribulose bisphosphate carboxylase large chain of Isophysis tasmanica.